Here is a 499-residue protein sequence, read N- to C-terminus: Maturase K (499 aa).

Belongs to the intron maturase 2 family. MatK subfamily.

It is found in the plastid. The protein resides in the chloroplast. In terms of biological role, usually encoded in the trnK tRNA gene intron. Probably assists in splicing its own and other chloroplast group II introns. This chain is Maturase K, found in Macrozamia communis (Burrawang palm).